A 302-amino-acid polypeptide reads, in one-letter code: Aspartate carbamoyltransferase catalytic subunit (302 aa).

Positions 53 and 54 each coordinate carbamoyl phosphate. Lys82 contributes to the L-aspartate binding site. Residues Arg103, His131, and Gln134 each coordinate carbamoyl phosphate. L-aspartate is bound by residues Arg164 and Arg223. Positions 260 and 261 each coordinate carbamoyl phosphate.

The protein belongs to the aspartate/ornithine carbamoyltransferase superfamily. ATCase family. Heterooligomer of catalytic and regulatory chains.

It catalyses the reaction carbamoyl phosphate + L-aspartate = N-carbamoyl-L-aspartate + phosphate + H(+). Its pathway is pyrimidine metabolism; UMP biosynthesis via de novo pathway; (S)-dihydroorotate from bicarbonate: step 2/3. In terms of biological role, catalyzes the condensation of carbamoyl phosphate and aspartate to form carbamoyl aspartate and inorganic phosphate, the committed step in the de novo pyrimidine nucleotide biosynthesis pathway. In Methanococcus maripaludis (strain DSM 14266 / JCM 13030 / NBRC 101832 / S2 / LL), this protein is Aspartate carbamoyltransferase catalytic subunit.